Reading from the N-terminus, the 532-residue chain is Putative 57 kDa heat shock protein (532 aa).

SHSP domains are found at residues 25-134 and 439-532; these read VNGP…CKIT and SVLE…IPSN.

It belongs to the small heat shock protein (HSP20) family.

This is Putative 57 kDa heat shock protein from Arabidopsis thaliana (Mouse-ear cress).